Consider the following 268-residue polypeptide: Tryptophan synthase alpha chain (268 aa).

Catalysis depends on proton acceptor residues Glu49 and Asp60.

The protein belongs to the TrpA family. As to quaternary structure, tetramer of two alpha and two beta chains.

The catalysed reaction is (1S,2R)-1-C-(indol-3-yl)glycerol 3-phosphate + L-serine = D-glyceraldehyde 3-phosphate + L-tryptophan + H2O. It participates in amino-acid biosynthesis; L-tryptophan biosynthesis; L-tryptophan from chorismate: step 5/5. Functionally, the alpha subunit is responsible for the aldol cleavage of indoleglycerol phosphate to indole and glyceraldehyde 3-phosphate. This chain is Tryptophan synthase alpha chain, found in Pseudomonas paraeruginosa (strain DSM 24068 / PA7) (Pseudomonas aeruginosa (strain PA7)).